The sequence spans 196 residues: Phosphoheptose isomerase (196 aa).

The SIS domain occupies 35–194 (LTACLRCGGK…EKELFTPSGQ (160 aa)). Substrate is bound at residue 50 to 52 (NGG). Zn(2+) is bound by residues His-59 and Glu-63. Residues Glu-63, 92 to 93 (ND), 118 to 120 (STS), Ser-123, and Gln-170 each bind substrate. Gln-170 and His-178 together coordinate Zn(2+).

The protein belongs to the SIS family. GmhA subfamily. In terms of assembly, homotetramer. The cofactor is Zn(2+).

The protein localises to the cytoplasm. It catalyses the reaction 2 D-sedoheptulose 7-phosphate = D-glycero-alpha-D-manno-heptose 7-phosphate + D-glycero-beta-D-manno-heptose 7-phosphate. It functions in the pathway carbohydrate biosynthesis; D-glycero-D-manno-heptose 7-phosphate biosynthesis; D-glycero-alpha-D-manno-heptose 7-phosphate and D-glycero-beta-D-manno-heptose 7-phosphate from sedoheptulose 7-phosphate: step 1/1. Catalyzes the isomerization of sedoheptulose 7-phosphate in D-glycero-D-manno-heptose 7-phosphate. This is Phosphoheptose isomerase from Syntrophotalea carbinolica (strain DSM 2380 / NBRC 103641 / GraBd1) (Pelobacter carbinolicus).